Reading from the N-terminus, the 1722-residue chain is MSDPRPSQAEKHKLGRAAAKLKDPSRTMQADDYFARKFKAINGSMGPATLNTSSSSEGGGGGGGPANGTPAVPKMGVRARVSEWPPKKDCSKDLACKTLWESRSQSSYESVTSIIQNGQNDQGDRQPEEQLDLDFVEAKYTIGDIFVHSPQRGLHPIRQRSNSDITISDIDTEDVLDQHAVNPNTGAALHREYGSTSSIDRQGLSGENVFAMLRGYRIESYDPKVTGSFGFPDFFPCDTAISPSLHAAAQISRGEFVRISGLDYMDGGLLMGRDRDKPFKRRLKSESVETSLFRKLRAVKSEHETFKFTSDLEEGRLDRGIRPWSCQRCFAHYDVQSILFNINEAMATRASVGKRKNITTGASAASQTPVPVGPAGGCESPLGSKEDLNSKENPDADEGDGKSNDLVLSCPYFRNETGGEGDRRIALSRANSASFSSGESCSFESSLSSHCTNAGVSVLEVPRESQPIHREKVKRYIIEHVDLGAYYYRKFFYGKEHQNYFGIDENLGPVAVSIRREKVEDPREKEGSQFNYRVAFRTSELTTLRGAILEDAVPSTARHGTARGLPLKEVLEYVIPELSIQCLRQAANSPKVPEQLLKLDEQGLSFQHKIGILYCRAGQSTEEEMYNNETAGPAFEEFLDLLGQRVRLKGFSKYRAQLDNKTDSTGTHSLYTTYKDFELMFHVSTLLPYMPNNRQQLLRKRHIGNDIVTIVFQEPGALPFTPKNIRSHFQHVFVIVKVHNPCTENVCYSVGVSRSKDVPPFGPPIPKGVTFPKSAVFRDFLLAKVINAENAAHKSEKFRAMATRTRQEYLKDLAENFVTTATVDTSAKFSFITLGAKKKERVKPRKDAHLFSIGAIMWHVVARDFGQSADIECLLGISNEFIMLIEKDSKNVVFNCSCRDVIGWTSGLVSIKAFYERGECLLLSSVDNRSEDIREIVQRLLIVTRGCETVEMTLRRNGLGQLGFHVNFEGIVADVEPFGFAWKAGLRQGSRLVEICKVAVATLTHEQMIDLLRTSVTVKVVIIQPHEDGSPRRGCSELCRIPMVEYKLDSEGTPCEYKTPFRRNTTWHRVPTPALQPVSRASPVPGTPDRLQCQPLLQQAQAAIPRSTSFDRKLPDGTRSSPSNQSSSSDPGPGGSGPWRPQVGYDGCPSPLLLEHQGPGSVECDGTGEQEDLLEGGRLPETKWHGPPSKVLSSYKERVLQKDGSCKESPNKLSHIGDKSCSSHSSSNTLSSNTSSNSDDKHFGSGDLMDPELLGLTYIKGASTDSGIDTTPCMPATILGPVHLTGSRSLMHSRAEQWADAADVSVADDDPAKMYALHGYASAISSSAADGSMGDLSEVSSHSSGSQHSGSPSAHCSKSTGSLDSSKVYIVTHGGGQQAPGAVTKPYHRQGAANKYVIGWKKSEGSPPPEEPEVTECPRIYGEMDIMSTATQHPAVVGDSVSETQHVLSKDDFLKLMLPDSPLVEEGRRKFSFYGNVSPRRSLYRTLSDESVCSNRRGSSFASSRSSILEQALPNDILFSTTPPYHSTLPPRTHPAPSMGSLRNEFWFSDGSLSDKSKCADPGLMPLPDTAAGLDWSHLVDAARAFEGLDSDEELGLLCHHASYLDQRVASFCTLTDLQHGQELEGAPELSLCVDPTSGKEFMDTPGERSPSTLTGKVNQLELILRQLQTDLRKEKQDKAVLQAEVQHLRQDNMRLQEESQTATAQLRKFTEWFFSTIDKKA.

2 disordered regions span residues 1 to 29 (MSDP…RTMQ) and 44 to 72 (SMGP…TPAV). The span at 57–66 (EGGGGGGGPA) shows a compositional bias: gly residues. Residues Ser149, Ser380, and Ser384 each carry the phosphoserine modification. Residues 362–405 (ASAASQTPVPVGPAGGCESPLGSKEDLNSKENPDADEGDGKSND) are disordered. Residues 384–403 (SKEDLNSKENPDADEGDGKS) show a composition bias toward basic and acidic residues. A Rap-GAP domain is found at 596 to 813 (LLKLDEQGLS…RTRQEYLKDL (218 aa)). Residues 951–1027 (EMTLRRNGLG…VKVVIIQPHE (77 aa)) form the PDZ domain. Residue Ser1030 is modified to Phosphoserine. Disordered regions lie at residues 1068 to 1246 (HRVP…FGSG) and 1331 to 1360 (GSMG…SKST). 2 stretches are compositionally biased toward low complexity: residues 1091 to 1103 (LQCQ…AQAA) and 1120 to 1131 (SSPSNQSSSSDP). Basic and acidic residues predominate over residues 1195 to 1218 (YKERVLQKDGSCKESPNKLSHIGD). Low complexity predominate over residues 1220–1237 (SCSSHSSSNTLSSNTSSN). The residue at position 1245 (Ser1245) is a Phosphoserine. The span at 1331 to 1355 (GSMGDLSEVSSHSSGSQHSGSPSAH) shows a compositional bias: low complexity. Phosphoserine is present on residues Ser1461, Ser1472, Ser1478, Ser1488, Ser1549, Ser1552, and Ser1591. The stretch at 1652–1712 (STLTGKVNQL…ATAQLRKFTE (61 aa)) forms a coiled coil.

The polypeptide is Signal-induced proliferation-associated 1-like protein 2 (Sipa1l2) (Mus musculus (Mouse)).